The following is a 394-amino-acid chain: 8-amino-7-oxononanoate synthase (394 aa).

Arg21 is a binding site for substrate. 112–113 (GY) lines the pyridoxal 5'-phosphate pocket. His137 is a binding site for substrate. Residues Ser183, His211, and Thr239 each contribute to the pyridoxal 5'-phosphate site. Lys242 bears the N6-(pyridoxal phosphate)lysine mark. Thr358 provides a ligand contact to substrate.

The protein belongs to the class-II pyridoxal-phosphate-dependent aminotransferase family. BioF subfamily. Homodimer. Pyridoxal 5'-phosphate serves as cofactor.

It catalyses the reaction 6-carboxyhexanoyl-[ACP] + L-alanine + H(+) = (8S)-8-amino-7-oxononanoate + holo-[ACP] + CO2. It functions in the pathway cofactor biosynthesis; biotin biosynthesis. Functionally, catalyzes the decarboxylative condensation of pimeloyl-[acyl-carrier protein] and L-alanine to produce 8-amino-7-oxononanoate (AON), [acyl-carrier protein], and carbon dioxide. In Paraburkholderia xenovorans (strain LB400), this protein is 8-amino-7-oxononanoate synthase.